A 229-amino-acid chain; its full sequence is UPF0128 protein aq_756 (229 aa).

The protein belongs to the UPF0128 family.

This Aquifex aeolicus (strain VF5) protein is UPF0128 protein aq_756.